The following is a 207-amino-acid chain: rRNA N(6)-adenosine-methyltransferase METTL5 (207 aa).

Residues Gln25, Thr28, Gly56, Cys59, Val61, Asp78, and 105 to 106 (DV) each bind S-adenosyl-L-methionine.

This sequence belongs to the methyltransferase superfamily. PrmA family.

The protein localises to the nucleus. It is found in the presynapse. The protein resides in the postsynapse. The catalysed reaction is adenosine(1832) in 18S rRNA + S-adenosyl-L-methionine = N(6)-methyladenosine(1832) in 18S rRNA + S-adenosyl-L-homocysteine + H(+). RRNA N6-adenosine-methyltransferase activity is inhibited by zinc. Functionally, catalytic subunit of a heterodimer with TRMT112, which specifically methylates the 6th position of adenine in position 1832 of 18S rRNA. N6-methylation of adenine(1832) in 18S rRNA resides in the decoding center of 18S rRNA and is required for translation and embryonic stem cells (ESCs) pluripotency and differentiation. This is rRNA N(6)-adenosine-methyltransferase METTL5 from Danio rerio (Zebrafish).